The primary structure comprises 276 residues: Large ribosomal subunit protein uL2 (276 aa).

Residues 225-276 (MNPNDHPHGGGEGRNPIGRNPVTPWGKPALGAKTRKKKHPSNRFIVKRRGKK) form a disordered region. The span at 257–276 (KTRKKKHPSNRFIVKRRGKK) shows a compositional bias: basic residues.

This sequence belongs to the universal ribosomal protein uL2 family. As to quaternary structure, part of the 50S ribosomal subunit. Forms a bridge to the 30S subunit in the 70S ribosome.

In terms of biological role, one of the primary rRNA binding proteins. Required for association of the 30S and 50S subunits to form the 70S ribosome, for tRNA binding and peptide bond formation. It has been suggested to have peptidyltransferase activity; this is somewhat controversial. Makes several contacts with the 16S rRNA in the 70S ribosome. The chain is Large ribosomal subunit protein uL2 from Desulfitobacterium hafniense (strain Y51).